The following is a 198-amino-acid chain: DnaJ homolog subfamily C member 12 (198 aa).

An N-acetylmethionine modification is found at methionine 1. Residues 14 to 79 enclose the J domain; it reads DYYTLLGCDE…ESRARYDHWR (66 aa). Over residues 114 to 156 the composition is skewed to basic and acidic residues; the sequence is EESDKTHTTKMENEECNEQRERKKEELASTAEKTEQKEPKPLE. The interval 114 to 169 is disordered; sequence EESDKTHTTKMENEECNEQRERKKEELASTAEKTEQKEPKPLEKSVSPQNSDSSGF. Serine 160, serine 166, and serine 182 each carry phosphoserine.

As to quaternary structure, interacts with HSPA8. Interacts with TPH1. Interacts with TPH2. Expressed at high levels in brain, heart, and testis, and at reduced levels in kidney and stomach.

The protein localises to the cytoplasm. Its function is as follows. Probable co-chaperone that participates in the proper folding of biopterin-dependent aromatic amino acid hydroxylases, which include phenylalanine-4-hydroxylase (PAH), tyrosine 3-monooxygenase (TH) and peripheral and neuronal tryptophan hydroxylases (TPH1 and TPH2). This chain is DnaJ homolog subfamily C member 12 (DNAJC12), found in Homo sapiens (Human).